The sequence spans 145 residues: D-aminoacyl-tRNA deacylase (145 aa).

The Gly-cisPro motif, important for rejection of L-amino acids motif lies at 137-138; that stretch reads GP.

The protein belongs to the DTD family. Homodimer.

It is found in the cytoplasm. It catalyses the reaction glycyl-tRNA(Ala) + H2O = tRNA(Ala) + glycine + H(+). The enzyme catalyses a D-aminoacyl-tRNA + H2O = a tRNA + a D-alpha-amino acid + H(+). In terms of biological role, an aminoacyl-tRNA editing enzyme that deacylates mischarged D-aminoacyl-tRNAs. Also deacylates mischarged glycyl-tRNA(Ala), protecting cells against glycine mischarging by AlaRS. Acts via tRNA-based rather than protein-based catalysis; rejects L-amino acids rather than detecting D-amino acids in the active site. By recycling D-aminoacyl-tRNA to D-amino acids and free tRNA molecules, this enzyme counteracts the toxicity associated with the formation of D-aminoacyl-tRNA entities in vivo and helps enforce protein L-homochirality. In Lactobacillus gasseri (strain ATCC 33323 / DSM 20243 / BCRC 14619 / CIP 102991 / JCM 1131 / KCTC 3163 / NCIMB 11718 / NCTC 13722 / AM63), this protein is D-aminoacyl-tRNA deacylase.